Consider the following 320-residue polypeptide: tRNA(Ile)-lysidine synthase, chloroplastic (320 aa).

An ATP-binding site is contributed by 31–36 (SGGKDS).

Belongs to the tRNA(Ile)-lysidine synthase family.

It is found in the plastid. It localises to the chloroplast. It carries out the reaction cytidine(34) in tRNA(Ile2) + L-lysine + ATP = lysidine(34) in tRNA(Ile2) + AMP + diphosphate + H(+). Functionally, ligates lysine onto the cytidine present at position 34 of the AUA codon-specific tRNA(Ile) that contains the anticodon CAU, in an ATP-dependent manner. Cytidine is converted to lysidine, thus changing the amino acid specificity of the tRNA from methionine to isoleucine. This Gracilaria tenuistipitata var. liui (Red alga) protein is tRNA(Ile)-lysidine synthase, chloroplastic.